The sequence spans 314 residues: Methionyl-tRNA formyltransferase (314 aa).

110 to 113 (SLLP) serves as a coordination point for (6S)-5,6,7,8-tetrahydrofolate.

This sequence belongs to the Fmt family.

It catalyses the reaction L-methionyl-tRNA(fMet) + (6R)-10-formyltetrahydrofolate = N-formyl-L-methionyl-tRNA(fMet) + (6S)-5,6,7,8-tetrahydrofolate + H(+). Attaches a formyl group to the free amino group of methionyl-tRNA(fMet). The formyl group appears to play a dual role in the initiator identity of N-formylmethionyl-tRNA by promoting its recognition by IF2 and preventing the misappropriation of this tRNA by the elongation apparatus. This chain is Methionyl-tRNA formyltransferase, found in Bacillus thuringiensis subsp. konkukian (strain 97-27).